A 194-amino-acid chain; its full sequence is dTTP/UTP pyrophosphatase (194 aa).

The Proton acceptor role is filled by D66.

It belongs to the Maf family. YhdE subfamily. The cofactor is a divalent metal cation.

The protein resides in the cytoplasm. The catalysed reaction is dTTP + H2O = dTMP + diphosphate + H(+). It carries out the reaction UTP + H2O = UMP + diphosphate + H(+). Its function is as follows. Nucleoside triphosphate pyrophosphatase that hydrolyzes dTTP and UTP. May have a dual role in cell division arrest and in preventing the incorporation of modified nucleotides into cellular nucleic acids. This chain is dTTP/UTP pyrophosphatase, found in Anaeromyxobacter dehalogenans (strain 2CP-C).